A 306-amino-acid chain; its full sequence is tRNA dimethylallyltransferase (306 aa).

Residue 15–22 participates in ATP binding; sequence GPTASGKS. Residue 17 to 22 coordinates substrate; that stretch reads TASGKS. Residues 40–43 form an interaction with substrate tRNA region; sequence DSMQ.

This sequence belongs to the IPP transferase family. In terms of assembly, monomer. The cofactor is Mg(2+).

The catalysed reaction is adenosine(37) in tRNA + dimethylallyl diphosphate = N(6)-dimethylallyladenosine(37) in tRNA + diphosphate. In terms of biological role, catalyzes the transfer of a dimethylallyl group onto the adenine at position 37 in tRNAs that read codons beginning with uridine, leading to the formation of N6-(dimethylallyl)adenosine (i(6)A). This is tRNA dimethylallyltransferase from Methylobacterium sp. (strain 4-46).